The chain runs to 428 residues: GTPase Obg (428 aa).

One can recognise an Obg domain in the interval 1–158 (MFIDQVKIYV…RDVILELKVL (158 aa)). The OBG-type G domain occupies 159-329 (ADVGLVGFPS…LLFEVANLIE (171 aa)). GTP contacts are provided by residues 165–172 (GFPSVGKS), 190–194 (FTTIV), 212–215 (DLPG), 282–285 (NKMD), and 310–312 (SAV). Positions 172 and 192 each coordinate Mg(2+). The OCT domain maps to 350–428 (KFETEGVKFD…ILEYEFEFID (79 aa)).

The protein belongs to the TRAFAC class OBG-HflX-like GTPase superfamily. OBG GTPase family. In terms of assembly, monomer. Requires Mg(2+) as cofactor.

Its subcellular location is the cytoplasm. In terms of biological role, an essential GTPase which binds GTP, GDP and possibly (p)ppGpp with moderate affinity, with high nucleotide exchange rates and a fairly low GTP hydrolysis rate. Plays a role in control of the cell cycle, stress response, ribosome biogenesis and in those bacteria that undergo differentiation, in morphogenesis control. The polypeptide is GTPase Obg (Bacillus anthracis).